A 131-amino-acid chain; its full sequence is Maturin (131 aa).

Tyrosine 34 is modified (phosphotyrosine). A compositionally biased stretch (acidic residues) spans phenylalanine 107–glutamate 120. Residues phenylalanine 107–glutamine 131 are disordered.

Belongs to the MTURN family. Phosphorylation at Tyr-34 is essential for its ability to promote megakaryocyte differentiation.

It localises to the cytoplasm. Promotes megakaryocyte differentiation by enhancing ERK and JNK signaling as well as up-regulating RUNX1 and FLI1 expression. Represses NF-kappa-B transcriptional activity by inhibiting phosphorylation of RELA at 'Ser- 536'. May be involved in early neuronal development. The protein is Maturin (Mturn) of Rattus norvegicus (Rat).